Here is a 269-residue protein sequence, read N- to C-terminus: Putative phosphoenolpyruvate synthase regulatory protein (269 aa).

149–156 (GVSRSGKT) contacts ADP.

Belongs to the pyruvate, phosphate/water dikinase regulatory protein family. PSRP subfamily.

It catalyses the reaction [pyruvate, water dikinase] + ADP = [pyruvate, water dikinase]-phosphate + AMP + H(+). The catalysed reaction is [pyruvate, water dikinase]-phosphate + phosphate + H(+) = [pyruvate, water dikinase] + diphosphate. Bifunctional serine/threonine kinase and phosphorylase involved in the regulation of the phosphoenolpyruvate synthase (PEPS) by catalyzing its phosphorylation/dephosphorylation. The sequence is that of Putative phosphoenolpyruvate synthase regulatory protein from Colwellia psychrerythraea (strain 34H / ATCC BAA-681) (Vibrio psychroerythus).